An 84-amino-acid polypeptide reads, in one-letter code: uncharacterized protein (84 aa).

Residues 1–21 form a disordered region; it reads MYYRRQGEPQEMYGNGNNSVS. Residues 49 to 69 form a helical membrane-spanning segment; that stretch reads YIIYAIVAAILLLLFWLLYKK.

It localises to the membrane. This is an uncharacterized protein from Invertebrate iridescent virus 6 (IIV-6).